Reading from the N-terminus, the 173-residue chain is Protein SUGARY ENHANCER 1 (173 aa).

The disordered stretch occupies residues 1 to 31; it reads MIRPAPWVGAGHRGRGGEAGACTESLGSESG.

It belongs to the fantastic four family.

Its function is as follows. Involved in starch metabolism in endosperm. Acts as a modifier of SUGARY1 (SU1), an isoamylase starch-debranching enzyme involved in amylopectin biosynthesis in endosperm. The chain is Protein SUGARY ENHANCER 1 from Zea mays (Maize).